The following is a 517-amino-acid chain: Legumin A (517 aa).

The N-terminal stretch at 1–21 (MAKLLALSLSFCFLLLGGCFA) is a signal peptide. Intrachain disulfides connect cysteine 31-cysteine 64 and cysteine 107-cysteine 339. The 197-residue stretch at 36–232 (LDALEPDNRI…AFNVNRHIVD (197 aa)) folds into the Cupin type-1 1 domain. Residues 249-335 (VKGGLSIISP…SRRQGDNGLE (87 aa)) form a disordered region. The region spanning 345–494 (LNIGPSSSPD…TFNLQRNEAR (150 aa)) is the Cupin type-1 2 domain.

Belongs to the 11S seed storage protein (globulins) family. As to quaternary structure, hexamer; each subunit is composed of an acidic and a basic chain derived from a single precursor and linked by a disulfide bond.

This protein found in the seeds of many leguminous and non-leguminous plants is the source of sulfur-containing amino acids in seed meals. The sequence is that of Legumin A (LEGA) from Pisum sativum (Garden pea).